The following is a 248-amino-acid chain: Isoprenyl transferase (248 aa).

D28 is an active-site residue. D28 contributes to the Mg(2+) binding site. Residues 29 to 32 (GNGR), W33, R41, H45, and 73 to 75 (SSE) contribute to the substrate site. N76 functions as the Proton acceptor in the catalytic mechanism. Substrate contacts are provided by residues W77, R79, R196, and 202–204 (RLS). E215 is a binding site for Mg(2+).

The protein belongs to the UPP synthase family. Homodimer. Mg(2+) is required as a cofactor.

Its function is as follows. Catalyzes the condensation of isopentenyl diphosphate (IPP) with allylic pyrophosphates generating different type of terpenoids. This chain is Isoprenyl transferase, found in Zymomonas mobilis subsp. mobilis (strain ATCC 31821 / ZM4 / CP4).